The primary structure comprises 191 residues: Auxin-responsive protein IAA32 (191 aa).

Positions 32–36 match the EAR-like (transcriptional repression) motif; sequence LGLSL. The PB1 domain maps to 98 to 184; sequence YAYVKVNLDG…SVDRMRIARR (87 aa).

The protein belongs to the Aux/IAA family. As to quaternary structure, homodimers and heterodimers.

The protein localises to the nucleus. Functionally, aux/IAA proteins are short-lived transcriptional factors that function as repressors of early auxin response genes at low auxin concentrations. Repression is thought to result from the interaction with auxin response factors (ARFs), proteins that bind to the auxin-responsive promoter element (AuxRE). Formation of heterodimers with ARF proteins may alter their ability to modulate early auxin response genes expression. This chain is Auxin-responsive protein IAA32, found in Arabidopsis thaliana (Mouse-ear cress).